Consider the following 314-residue polypeptide: Methionyl-tRNA formyltransferase (314 aa).

Residue 110 to 113 (SLLP) coordinates (6S)-5,6,7,8-tetrahydrofolate.

It belongs to the Fmt family.

It catalyses the reaction L-methionyl-tRNA(fMet) + (6R)-10-formyltetrahydrofolate = N-formyl-L-methionyl-tRNA(fMet) + (6S)-5,6,7,8-tetrahydrofolate + H(+). Its function is as follows. Attaches a formyl group to the free amino group of methionyl-tRNA(fMet). The formyl group appears to play a dual role in the initiator identity of N-formylmethionyl-tRNA by promoting its recognition by IF2 and preventing the misappropriation of this tRNA by the elongation apparatus. This is Methionyl-tRNA formyltransferase from Bacillus anthracis (strain A0248).